The primary structure comprises 95 residues: Large ribosomal subunit protein bL27 (95 aa).

Residues 1 to 24 (MAHKKGTGSTRNGRDSNSQRLGVK) form a disordered region. The segment covering 7 to 20 (TGSTRNGRDSNSQR) has biased composition (polar residues).

This sequence belongs to the bacterial ribosomal protein bL27 family.

The chain is Large ribosomal subunit protein bL27 from Trichodesmium erythraeum (strain IMS101).